Reading from the N-terminus, the 103-residue chain is Somatostatin-2 (103 aa).

The N-terminal stretch at 1-21 (MLGSAGTLLLLLLAWGARALS) is a signal peptide. Positions 22 to 87 (QPDDNRITTG…VKFPRLSLRE (66 aa)) are excised as a propeptide. Cys92 and Cys103 are joined by a disulfide.

Belongs to the somatostatin family.

The protein localises to the secreted. Its function is as follows. Somatostatin inhibits the release of somatotropin. The chain is Somatostatin-2 (sst2) from Pelophylax ridibundus (Marsh frog).